Consider the following 179-residue polypeptide: Large ribosomal subunit protein uL5 (179 aa).

It belongs to the universal ribosomal protein uL5 family. Part of the 50S ribosomal subunit; part of the 5S rRNA/L5/L18/L25 subcomplex. Contacts the 5S rRNA and the P site tRNA. Forms a bridge to the 30S subunit in the 70S ribosome.

In terms of biological role, this is one of the proteins that bind and probably mediate the attachment of the 5S RNA into the large ribosomal subunit, where it forms part of the central protuberance. In the 70S ribosome it contacts protein S13 of the 30S subunit (bridge B1b), connecting the 2 subunits; this bridge is implicated in subunit movement. Contacts the P site tRNA; the 5S rRNA and some of its associated proteins might help stabilize positioning of ribosome-bound tRNAs. This Aromatoleum aromaticum (strain DSM 19018 / LMG 30748 / EbN1) (Azoarcus sp. (strain EbN1)) protein is Large ribosomal subunit protein uL5.